Reading from the N-terminus, the 325-residue chain is Tagatose 1,6-diphosphate aldolase (325 aa).

This sequence belongs to the aldolase LacD family.

It catalyses the reaction D-tagatofuranose 1,6-bisphosphate = D-glyceraldehyde 3-phosphate + dihydroxyacetone phosphate. The protein operates within carbohydrate metabolism; D-tagatose 6-phosphate degradation; D-glyceraldehyde 3-phosphate and glycerone phosphate from D-tagatose 6-phosphate: step 2/2. This Staphylococcus haemolyticus (strain JCSC1435) protein is Tagatose 1,6-diphosphate aldolase.